Consider the following 292-residue polypeptide: Protein PHR1-LIKE 3 (292 aa).

Residues T34–Q94 form the HTH myb-type domain. Positions P65 to R90 form a DNA-binding region, H-T-H motif. Residues T137–Q157 adopt a coiled-coil conformation. An LHEQLE motif is present at residues L150–E155.

It belongs to the MYB-CC family. Homo- and heterodimers. Interacts with PHL2, but not with PHR1.

The protein resides in the nucleus. In terms of biological role, transcriptional activator. Probable component of the central regulatory system controlling transcriptional responses to Pi starvation. Binds in a sequence-specific manner to phosphate starvation-regulated promoters. Required for female gametophyte development and function. In Arabidopsis thaliana (Mouse-ear cress), this protein is Protein PHR1-LIKE 3.